We begin with the raw amino-acid sequence, 53 residues long: GDFTWNSLSGRSVRLAPVDIQSLSELERARLQEVAFTRLHQDYDLGCQITMPK.

The protein localises to the cytoplasm. Its function is as follows. GTPase activator for the Rho-type GTPases by converting them to an inactive GDP-bound state. Could regulate the interactions of signaling molecules with the actin cytoskeleton. Promotes continuous elongation of cytoplasmic processes during cell motility and simultaneous retraction of the cell body changing the cell morphology. This Takifugu rubripes (Japanese pufferfish) protein is Rho GTPase-activating protein 6 (arhgap6).